A 1407-amino-acid polypeptide reads, in one-letter code: DNA-directed RNA polymerase subunit beta' (1407 aa).

Cys70, Cys72, Cys85, and Cys88 together coordinate Zn(2+). 3 residues coordinate Mg(2+): Asp460, Asp462, and Asp464. Residue Lys972 is modified to N6-acetyllysine.

This sequence belongs to the RNA polymerase beta' chain family. In terms of assembly, the RNAP catalytic core consists of 2 alpha, 1 beta, 1 beta' and 1 omega subunit. When a sigma factor is associated with the core the holoenzyme is formed, which can initiate transcription. The cofactor is Mg(2+). Zn(2+) serves as cofactor.

It catalyses the reaction RNA(n) + a ribonucleoside 5'-triphosphate = RNA(n+1) + diphosphate. In terms of biological role, DNA-dependent RNA polymerase catalyzes the transcription of DNA into RNA using the four ribonucleoside triphosphates as substrates. This Escherichia coli O6:K15:H31 (strain 536 / UPEC) protein is DNA-directed RNA polymerase subunit beta'.